Here is a 124-residue protein sequence, read N- to C-terminus: Aspartate 1-decarboxylase (124 aa).

The active-site Schiff-base intermediate with substrate; via pyruvic acid is S21. S21 carries the post-translational modification Pyruvic acid (Ser). T53 is a substrate binding site. Y54 acts as the Proton donor in catalysis. 69 to 71 contributes to the substrate binding site; sequence GAA.

Belongs to the PanD family. As to quaternary structure, heterooctamer of four alpha and four beta subunits. The cofactor is pyruvate. In terms of processing, is synthesized initially as an inactive proenzyme, which is activated by self-cleavage at a specific serine bond to produce a beta-subunit with a hydroxyl group at its C-terminus and an alpha-subunit with a pyruvoyl group at its N-terminus.

It localises to the cytoplasm. It carries out the reaction L-aspartate + H(+) = beta-alanine + CO2. Its pathway is cofactor biosynthesis; (R)-pantothenate biosynthesis; beta-alanine from L-aspartate: step 1/1. In terms of biological role, catalyzes the pyruvoyl-dependent decarboxylation of aspartate to produce beta-alanine. The protein is Aspartate 1-decarboxylase of Dehalococcoides mccartyi (strain CBDB1).